The primary structure comprises 487 residues: Aspyridones efflux protein apdF (487 aa).

The span at 1–21 shows a compositional bias: basic and acidic residues; sequence MSSVRESSKDESIVHPPKAPE. Residues 1–25 form a disordered region; it reads MSSVRESSKDESIVHPPKAPESEPF. A helical transmembrane segment spans residues 35 to 55; sequence VALGAGGVLFCTFGYVNAFGV. The N-linked (GlcNAc...) asparagine glycan is linked to N67. 8 consecutive transmembrane segments (helical) span residues 75-95, 99-119, 126-146, 159-179, 191-211, 234-254, 262-282, and 293-313; these read WIGS…GPLF, GAKV…MTSL, FFLA…APAL, AAMG…PIAL, WAVR…VLGI, VATL…FFYL, GMST…SFFG, and IGPY…TFCW. N319 is a glycosylation site (N-linked (GlcNAc...) asparagine). The next 3 helical transmembrane spans lie at 322–342, 354–374, and 385–405; these read IIVF…ITPA, IGTY…IGPP, and GFLQ…VLAF.

Belongs to the major facilitator superfamily. Monocarboxylate porter (TC 2.A.1.13) family.

Its subcellular location is the cell membrane. In terms of biological role, efflux pump that may be involved in the secretion of aspyridones. This chain is Aspyridones efflux protein apdF, found in Emericella nidulans (strain FGSC A4 / ATCC 38163 / CBS 112.46 / NRRL 194 / M139) (Aspergillus nidulans).